Here is a 211-residue protein sequence, read N- to C-terminus: Imidazole glycerol phosphate synthase subunit HisH (211 aa).

Residues S5–L211 enclose the Glutamine amidotransferase type-1 domain. The active-site Nucleophile is C83. Active-site residues include H192 and E194.

In terms of assembly, heterodimer of HisH and HisF.

Its subcellular location is the cytoplasm. It catalyses the reaction 5-[(5-phospho-1-deoxy-D-ribulos-1-ylimino)methylamino]-1-(5-phospho-beta-D-ribosyl)imidazole-4-carboxamide + L-glutamine = D-erythro-1-(imidazol-4-yl)glycerol 3-phosphate + 5-amino-1-(5-phospho-beta-D-ribosyl)imidazole-4-carboxamide + L-glutamate + H(+). The enzyme catalyses L-glutamine + H2O = L-glutamate + NH4(+). It participates in amino-acid biosynthesis; L-histidine biosynthesis; L-histidine from 5-phospho-alpha-D-ribose 1-diphosphate: step 5/9. IGPS catalyzes the conversion of PRFAR and glutamine to IGP, AICAR and glutamate. The HisH subunit catalyzes the hydrolysis of glutamine to glutamate and ammonia as part of the synthesis of IGP and AICAR. The resulting ammonia molecule is channeled to the active site of HisF. This is Imidazole glycerol phosphate synthase subunit HisH from Nocardia farcinica (strain IFM 10152).